Reading from the N-terminus, the 597-residue chain is Polyphenol oxidase latent form, chloroplastic (597 aa).

A chloroplast-targeting transit peptide spans 1 to 49 (MATAPSPTTMGTYSSLISTNSFSTFLPNKSQLSLSGKSKHYVARRSSIS). Positions 49-70 (SCKATNNNNSNNQNEQQEESSR) are disordered. The transit peptide at 50–101 (CKATNNNNSNNQNEQQEESSRLLGKLDRRNILIGLGGLYGATTLDRKPFAFA) directs the protein to the thylakoid. A compositionally biased stretch (low complexity) spans 54–63 (NNNNSNNQNE). Disulfide bonds link cysteine 112–cysteine 128 and cysteine 127–cysteine 189. Residues histidine 188, histidine 209, histidine 218, histidine 341, histidine 345, and histidine 375 each contribute to the Cu cation site. The segment at residues 192–209 (CNGAYPQVGFTDNDIQVH) is a cross-link (2'-(S-cysteinyl)-histidine (Cys-His)).

This sequence belongs to the tyrosinase family. In terms of assembly, monomer. The cofactor is Cu(2+). In terms of tissue distribution, expressed in immature-green fruit.

It localises to the plastid. The protein resides in the chloroplast thylakoid lumen. It catalyses the reaction 2 catechol + O2 = 2 1,2-benzoquinone + 2 H2O. Its activity is regulated as follows. Activated in the presence of substrate at low pH. Specific activity fluctuates during fruit ripening, starting at immature-green stage, reaching a peak at the breaker stage, followed by a sharp decrease until the half-ripe stage to remain stable during the following development stages. Triggered by CuSO(4) and by low concentrations of SDS. Repressed by several inhibitors including 4-hexylresorcinol, ascorbic acid, benzoic acid, kojic acid, glutathione (reduced form), L-cysteine and sodium metabisulfite. Inhibited by various salt such as FeSO(4), KCl, NaCl, CaCl(2), MnCl(2), NiCl(2) and AlCl(3). Spontaneously activated during storage at 4 degrees Celsius. In terms of biological role, catalyzes the oxidation of mono- and o-diphenols to o-diquinones. Uses preferentially 4-methylcatechol and chlorogenic acid as substrates, followed by caffeic acid, pyrogallol, and catechol, but barely active toward dopamine and L-dopa. No activity detected with monophenols (e.g. phenol and tyramine). The sequence is that of Polyphenol oxidase latent form, chloroplastic from Prunus armeniaca (Apricot).